We begin with the raw amino-acid sequence, 229 residues long: Chloride conductance regulatory protein ICln (229 aa).

Belongs to the pICln (TC 1.A.47) family. Homooligomer.

The protein localises to the cytoplasm. It localises to the nucleus. May participate in cellular volume control by activation of a swelling-induced chloride conductance pathway. This is Chloride conductance regulatory protein ICln from Arabidopsis thaliana (Mouse-ear cress).